The primary structure comprises 276 residues: Protein SCO1 homolog 2, mitochondrial (276 aa).

The N-terminal 14 residues, 1 to 14 (MLPCRRLVLSCKNQ), are a transit peptide targeting the mitochondrion. Residues 66–82 (YAVPAILLGFAGFVGFL) form a helical membrane-spanning segment. The 164-residue stretch at 110 to 273 (VKGPIIGGPF…SQELLKEVAS (164 aa)) folds into the Thioredoxin domain.

The protein belongs to the SCO1/2 family. In terms of tissue distribution, expressed in the whole plant with highest expression in imbibed seeds and embryos, and the root hair zone.

Its subcellular location is the mitochondrion inner membrane. In terms of biological role, thought to play a role in cellular copper homeostasis, mitochondrial redox signaling or insertion of copper into the active site of COX. Participates in copper and redox homeostasis. This Arabidopsis thaliana (Mouse-ear cress) protein is Protein SCO1 homolog 2, mitochondrial (HCC2).